Consider the following 726-residue polypeptide: Long-chain-alcohol oxidase FAO4A (726 aa).

Residues 103-119 form a helical membrane-spanning segment; sequence ILLNWSSSYFSLLRMLF. FAD is bound at residue 224 to 239; it reads CDAVVVGSGSGGGVAA. His659 acts as the Proton acceptor in catalysis.

It belongs to the GMC oxidoreductase family.

It is found in the membrane. The catalysed reaction is a long-chain primary fatty alcohol + O2 = a long-chain fatty aldehyde + H2O2. In terms of biological role, long-chain fatty alcohol oxidase involved in the omega-oxidation pathway of lipid degradation. The chain is Long-chain-alcohol oxidase FAO4A (FAO4A) from Arabidopsis thaliana (Mouse-ear cress).